The sequence spans 834 residues: DNA-directed RNA polymerase subunit beta' (834 aa).

The span at 1–22 (MTYSNKPTGSSLRSSRNSTLEP) shows a compositional bias: polar residues. The segment at 1–45 (MTYSNKPTGSSLRSSRNSTLEPQSLVHREESKRQEGPKGQNLRIG) is disordered. Over residues 26-36 (VHREESKRQEG) the composition is skewed to basic and acidic residues. Residues Cys-101, Cys-103, Cys-118, and Cys-121 each contribute to the Zn(2+) site. Mg(2+)-binding residues include Asp-606, Asp-608, and Asp-610.

It belongs to the RNA polymerase beta' chain family. RpoC1 subfamily. As to quaternary structure, in plastids the minimal PEP RNA polymerase catalytic core is composed of four subunits: alpha, beta, beta', and beta''. When a (nuclear-encoded) sigma factor is associated with the core the holoenzyme is formed, which can initiate transcription. Mg(2+) is required as a cofactor. Zn(2+) serves as cofactor.

It is found in the plastid. The protein localises to the chloroplast. The enzyme catalyses RNA(n) + a ribonucleoside 5'-triphosphate = RNA(n+1) + diphosphate. In terms of biological role, DNA-dependent RNA polymerase catalyzes the transcription of DNA into RNA using the four ribonucleoside triphosphates as substrates. This Staurastrum punctulatum (Green alga) protein is DNA-directed RNA polymerase subunit beta'.